Consider the following 478-residue polypeptide: Glutamyl-tRNA(Gln) amidotransferase subunit A 2 (478 aa).

Catalysis depends on charge relay system residues Lys-79 and Ser-154. Catalysis depends on Ser-178, which acts as the Acyl-ester intermediate.

It belongs to the amidase family. GatA subfamily. As to quaternary structure, heterotrimer of A, B and C subunits.

The catalysed reaction is L-glutamyl-tRNA(Gln) + L-glutamine + ATP + H2O = L-glutaminyl-tRNA(Gln) + L-glutamate + ADP + phosphate + H(+). Its function is as follows. Allows the formation of correctly charged Gln-tRNA(Gln) through the transamidation of misacylated Glu-tRNA(Gln) in organisms which lack glutaminyl-tRNA synthetase. The reaction takes place in the presence of glutamine and ATP through an activated gamma-phospho-Glu-tRNA(Gln). The sequence is that of Glutamyl-tRNA(Gln) amidotransferase subunit A 2 (gatA2) from Clostridium acetobutylicum (strain ATCC 824 / DSM 792 / JCM 1419 / IAM 19013 / LMG 5710 / NBRC 13948 / NRRL B-527 / VKM B-1787 / 2291 / W).